The following is a 329-amino-acid chain: DNA-directed RNA polymerase subunit alpha (329 aa).

The interval M1–E231 is alpha N-terminal domain (alpha-NTD). Residues F249–R329 are alpha C-terminal domain (alpha-CTD).

Belongs to the RNA polymerase alpha chain family. In terms of assembly, homodimer. The RNAP catalytic core consists of 2 alpha, 1 beta, 1 beta' and 1 omega subunit. When a sigma factor is associated with the core the holoenzyme is formed, which can initiate transcription.

The catalysed reaction is RNA(n) + a ribonucleoside 5'-triphosphate = RNA(n+1) + diphosphate. DNA-dependent RNA polymerase catalyzes the transcription of DNA into RNA using the four ribonucleoside triphosphates as substrates. The chain is DNA-directed RNA polymerase subunit alpha from Variovorax paradoxus (strain S110).